The chain runs to 239 residues: 1-(5-phosphoribosyl)-5-[(5-phosphoribosylamino)methylideneamino] imidazole-4-carboxamide isomerase (239 aa).

The Proton acceptor role is filled by Asp8. Catalysis depends on Asp129, which acts as the Proton donor.

It belongs to the HisA/HisF family.

The protein resides in the cytoplasm. The catalysed reaction is 1-(5-phospho-beta-D-ribosyl)-5-[(5-phospho-beta-D-ribosylamino)methylideneamino]imidazole-4-carboxamide = 5-[(5-phospho-1-deoxy-D-ribulos-1-ylimino)methylamino]-1-(5-phospho-beta-D-ribosyl)imidazole-4-carboxamide. It functions in the pathway amino-acid biosynthesis; L-histidine biosynthesis; L-histidine from 5-phospho-alpha-D-ribose 1-diphosphate: step 4/9. The sequence is that of 1-(5-phosphoribosyl)-5-[(5-phosphoribosylamino)methylideneamino] imidazole-4-carboxamide isomerase from Bacillus thuringiensis subsp. konkukian (strain 97-27).